We begin with the raw amino-acid sequence, 62 residues long: Large ribosomal subunit protein uL29 (62 aa).

This sequence belongs to the universal ribosomal protein uL29 family.

The protein is Large ribosomal subunit protein uL29 of Ruthia magnifica subsp. Calyptogena magnifica.